The chain runs to 197 residues: uncharacterized protein (197 aa).

This is an uncharacterized protein from Acanthamoeba polyphaga (Amoeba).